A 523-amino-acid chain; its full sequence is Glycerate kinase (523 aa).

Ser-60 is modified (phosphoserine). Lys-200 is subject to N6-acetyllysine.

This sequence belongs to the glycerate kinase type-2 family.

It is found in the cytoplasm. The catalysed reaction is (R)-glycerate + ATP = (2R)-3-phosphoglycerate + ADP + H(+). The chain is Glycerate kinase (Glyctk) from Rattus norvegicus (Rat).